The following is a 163-amino-acid chain: Endoribonuclease YbeY (163 aa).

Zn(2+)-binding residues include H116, H120, and H126.

It belongs to the endoribonuclease YbeY family. Zn(2+) serves as cofactor.

The protein resides in the cytoplasm. Single strand-specific metallo-endoribonuclease involved in late-stage 70S ribosome quality control and in maturation of the 3' terminus of the 16S rRNA. This is Endoribonuclease YbeY from Idiomarina loihiensis (strain ATCC BAA-735 / DSM 15497 / L2-TR).